A 236-amino-acid polypeptide reads, in one-letter code: 7-cyano-7-deazaguanine synthase (236 aa).

7 to 17 provides a ligand contact to ATP; the sequence is CSGGLDSVSLA. Cys-185, Cys-193, Cys-196, and Cys-199 together coordinate Zn(2+).

Belongs to the QueC family. It depends on Zn(2+) as a cofactor.

The catalysed reaction is 7-carboxy-7-deazaguanine + NH4(+) + ATP = 7-cyano-7-deazaguanine + ADP + phosphate + H2O + H(+). It participates in purine metabolism; 7-cyano-7-deazaguanine biosynthesis. In terms of biological role, catalyzes the ATP-dependent conversion of 7-carboxy-7-deazaguanine (CDG) to 7-cyano-7-deazaguanine (preQ(0)). The sequence is that of 7-cyano-7-deazaguanine synthase from Rhizobium leguminosarum bv. trifolii (strain WSM2304).